Consider the following 271-residue polypeptide: Formamidopyrimidine-DNA glycosylase (271 aa).

The active-site Schiff-base intermediate with DNA is proline 2. Residue glutamate 3 is the Proton donor of the active site. The active-site Proton donor; for beta-elimination activity is lysine 58. 3 residues coordinate DNA: histidine 92, arginine 111, and lysine 152. Residues 237–271 (YVYGKVQKPCKICNNIITLIRQNGRSTYFCNACQN) form an FPG-type zinc finger. The active-site Proton donor; for delta-elimination activity is arginine 261.

The protein belongs to the FPG family. Monomer. The cofactor is Zn(2+).

It catalyses the reaction Hydrolysis of DNA containing ring-opened 7-methylguanine residues, releasing 2,6-diamino-4-hydroxy-5-(N-methyl)formamidopyrimidine.. The catalysed reaction is 2'-deoxyribonucleotide-(2'-deoxyribose 5'-phosphate)-2'-deoxyribonucleotide-DNA = a 3'-end 2'-deoxyribonucleotide-(2,3-dehydro-2,3-deoxyribose 5'-phosphate)-DNA + a 5'-end 5'-phospho-2'-deoxyribonucleoside-DNA + H(+). Involved in base excision repair of DNA damaged by oxidation or by mutagenic agents. Acts as a DNA glycosylase that recognizes and removes damaged bases. Has a preference for oxidized purines, such as 7,8-dihydro-8-oxoguanine (8-oxoG). Has AP (apurinic/apyrimidinic) lyase activity and introduces nicks in the DNA strand. Cleaves the DNA backbone by beta-delta elimination to generate a single-strand break at the site of the removed base with both 3'- and 5'-phosphates. The polypeptide is Formamidopyrimidine-DNA glycosylase (Wolbachia pipientis wMel).